Consider the following 398-residue polypeptide: Probable RNA methyltransferase sce1580 (398 aa).

Residues 1-24 are disordered; that stretch reads MRVPEIPEETASPLRAGDPPAQVA. The active-site Proton acceptor is Glu140. The region spanning 146–378 is the Radical SAM core domain; sequence GPARTTLCVS…TLVRRPRGRD (233 aa). Cysteines 153 and 383 form a disulfide. Residues Cys160, Cys164, and Cys167 each coordinate [4Fe-4S] cluster. S-adenosyl-L-methionine is bound by residues 211 to 212, Ser243, 265 to 267, and Asn340; these read GE and SLN. The active-site S-methylcysteine intermediate is Cys383.

This sequence belongs to the radical SAM superfamily. RlmN family. The cofactor is [4Fe-4S] cluster.

The protein resides in the cytoplasm. This is Probable RNA methyltransferase sce1580 from Sorangium cellulosum (strain So ce56) (Polyangium cellulosum (strain So ce56)).